The primary structure comprises 169 residues: Photosystem I assembly protein Ycf3 (169 aa).

TPR repeat units lie at residues 36 to 69 (AFTYYRDGMSAQSEGNYAEALQNYYEAMRLEIDP), 73 to 106 (SYILYNIGLIHTRNGEHTKALEYYFRALERNPFL), and 121 to 154 (GEQAIRQGDSEIAEAWFNQAAEYWKQAIALTPGN).

This sequence belongs to the Ycf3 family.

The protein localises to the plastid. It localises to the chloroplast thylakoid membrane. In terms of biological role, essential for the assembly of the photosystem I (PSI) complex. May act as a chaperone-like factor to guide the assembly of the PSI subunits. The polypeptide is Photosystem I assembly protein Ycf3 (Cucumis sativus (Cucumber)).